The chain runs to 299 residues: UDP-N-acetylenolpyruvoylglucosamine reductase (299 aa).

The 166-residue stretch at lysine 27 to glycine 192 folds into the FAD-binding PCMH-type domain. Arginine 172 is an active-site residue. The interval alanine 206–asparagine 225 is disordered. Residues arginine 208–lysine 224 show a composition bias toward polar residues. The active-site Proton donor is the serine 221. The active site involves glutamate 291.

It belongs to the MurB family. FAD is required as a cofactor.

It is found in the cytoplasm. It catalyses the reaction UDP-N-acetyl-alpha-D-muramate + NADP(+) = UDP-N-acetyl-3-O-(1-carboxyvinyl)-alpha-D-glucosamine + NADPH + H(+). The protein operates within cell wall biogenesis; peptidoglycan biosynthesis. Functionally, cell wall formation. In Sphingopyxis alaskensis (strain DSM 13593 / LMG 18877 / RB2256) (Sphingomonas alaskensis), this protein is UDP-N-acetylenolpyruvoylglucosamine reductase.